Reading from the N-terminus, the 106-residue chain is ATP-dependent Clp protease adapter protein ClpS (106 aa).

Belongs to the ClpS family. Binds to the N-terminal domain of the chaperone ClpA.

Involved in the modulation of the specificity of the ClpAP-mediated ATP-dependent protein degradation. This chain is ATP-dependent Clp protease adapter protein ClpS, found in Vibrio vulnificus (strain CMCP6).